A 630-amino-acid polypeptide reads, in one-letter code: FAST kinase domain-containing protein 4 (630 aa).

The region spanning 560-618 (IAFLRWEFPNFNSRSKDLLGRFVLARRHVLAAGFLVVDVPYYEWLDLKSEWQKSAYLKD) is the RAP domain.

Belongs to the FAST kinase family. In terms of tissue distribution, expression detected in spleen, testis, colon, heart, smooth muscle, kidney, brain, lung, liver, brown and white adipose tissue with highest expression in testis, heart, smooth muscle and brown adipose tissue.

It localises to the mitochondrion matrix. Functionally, plays a role in processing of mitochondrial RNA precursors and in stabilization of a subset of mature mitochondrial RNA species, such as MT-CO1, MT-CO2, MT-CYB, MT-CO3, MT-ND3, MT-ND5 and MT-ATP8/6. May play a role in cell cycle progression. The polypeptide is FAST kinase domain-containing protein 4 (Tbrg4) (Mus musculus (Mouse)).